The following is a 532-amino-acid chain: Flavin-containing monooxygenase 1 (532 aa).

N-acetylalanine is present on Ala2. The Lumenal segment spans residues 2 to 510 (AKRVAIVGAG…TRIVQESPTP (509 aa)). Residues 9 to 13 (GAGVS), Glu32, 40 to 41 (LW), and 61 to 62 (NS) contribute to the FAD site. NADP(+) is bound by residues 60-61 (SN) and 195-198 (SGTD). Residues 511–531 (FASLLKLLSLLALLMAIFLIF) traverse the membrane as a helical segment. Position 532 (Leu532) is a topological domain, cytoplasmic.

The protein belongs to the FMO family. Requires FAD as cofactor. In terms of tissue distribution, liver.

The protein localises to the endoplasmic reticulum membrane. The enzyme catalyses hypotaurine + NADPH + O2 + H(+) = taurine + NADP(+) + H2O. The catalysed reaction is hypotaurine + NADH + O2 + H(+) = taurine + NAD(+) + H2O. It catalyses the reaction trimethylamine + NADPH + O2 = trimethylamine N-oxide + NADP(+) + H2O. It carries out the reaction N,N-dimethylaniline + NADPH + O2 + H(+) = N,N-dimethylaniline N-oxide + NADP(+) + H2O. Its function is as follows. Broad spectrum monooxygenase that catalyzes the oxygenation of a wide variety of nitrogen- and sulfur-containing compounds including xenobiotics. Catalyzes the S-oxygenation of hypotaurine to produce taurine, an organic osmolyte involved in cell volume regulation as well as a variety of cytoprotective and developmental processes. In vitro, catalyzes the N-oxygenation of trimethylamine (TMA) to produce trimethylamine N-oxide (TMAO) and could therefore participate to the detoxification of this compound that is generated by the action of gut microbiota from dietary precursors such as choline, choline containing compounds, betaine or L-carnitine. The polypeptide is Flavin-containing monooxygenase 1 (FMO1) (Canis lupus familiaris (Dog)).